The following is a 341-amino-acid chain: MATIKDVAKRANVSTTTVSHVINKTRFVAEETRNAVWAAIKELHYSPSAVARSLKVNHTKSIGLLATSSEAAYFAEIIEAVEKNCFQKGYTLILGNAWNNLEKQRAYLSMMAQKRVDGLLVMCSEYPEPLLAMLEEYRHIPMVVMDWGEAKADFTDAVIDNAFEGGYMAGRYLIERGHREIGVIPGPLERNTGAGRLAGFMKAMEEAMIKVPKSWIVQGDFEPESGYRAMQQILSQPHRPTAVFCGGDIMAMGALCAADEMGLRVPQDVSLIGYDNVRNARYFTPALTTIHQPKDSLGETAFNMLLDRIVNKREEPQSIEVHPRLIERRSVADGPFRDYRR.

The 55-residue stretch at 2–56 folds into the HTH lacI-type domain; it reads ATIKDVAKRANVSTTTVSHVINKTRFVAEETRNAVWAAIKELHYSPSAVARSLKV. The H-T-H motif DNA-binding region spans 4 to 23; that stretch reads IKDVAKRANVSTTTVSHVIN. The DNA-binding element occupies 48 to 56; that stretch reads SAVARSLKV. 5 residues coordinate hypoxanthine: Tyr-73, Arg-190, Thr-192, Phe-221, and Asp-275.

As to quaternary structure, homodimer.

It participates in purine metabolism; purine nucleotide biosynthesis [regulation]. Functionally, is the main repressor of the genes involved in the de novo synthesis of purine nucleotides, regulating purB, purC, purEK, purF, purHD, purL, purMN and guaBA expression. PurR is allosterically activated to bind its cognate DNA by binding the purine corepressors, hypoxanthine or guanine, thereby effecting transcription repression. The polypeptide is HTH-type transcriptional repressor PurR (Shigella dysenteriae serotype 1 (strain Sd197)).